The following is a 501-amino-acid chain: Raftlin-2 (501 aa).

Disordered regions lie at residues 1 to 20 and 196 to 238; these read MGCG…GKIF and SWNE…SRKG. Glycine 2 is lipidated: N-myristoyl glycine. Residue cysteine 3 is the site of S-palmitoyl cysteine attachment. Residues 224–233 are compositionally biased toward polar residues; that stretch reads MEQNGSPSSS. Serine 405 bears the Phosphoserine mark. Residues 407 to 454 are disordered; that stretch reads AQTTDKKASRRIKGEDKNKATSRSIGLDTTTPQPAESRHPPEECRLSP. Threonine 409 is subject to Phosphothreonine. Basic and acidic residues predominate over residues 410 to 425; the sequence is TDKKASRRIKGEDKNK. Residues 427 to 440 are compositionally biased toward polar residues; that stretch reads TSRSIGLDTTTPQP. At serine 430 the chain carries Phosphoserine. Positions 442–451 are enriched in basic and acidic residues; that stretch reads ESRHPPEECR.

The protein belongs to the raftlin family.

Its subcellular location is the cell membrane. Upon bacterial lipopolysaccharide stimulation, mediates clathrin-dependent internalization of TLR4 in dendritic cells, resulting in activation of TICAM1-mediated signaling and subsequent IFNB1 production. May regulate B-cell antigen receptor mediated-signaling. The chain is Raftlin-2 (RFTN2) from Pongo abelii (Sumatran orangutan).